Here is an 897-residue protein sequence, read N- to C-terminus: Macoilin (897 aa).

A run of 4 helical transmembrane segments spans residues 113–133, 157–177, 181–201, and 204–224; these read ICYL…YVWI, QSWP…FLRI, PILI…PVWP, and LNAF…TVSM. 2 stretches are compositionally biased toward polar residues: residues 291 to 304 and 329 to 338; these read IQAA…SSKK and GNSGFNSTPP. Positions 291-375 are disordered; the sequence is IQAASATPPT…DTSSSTIEDQ (85 aa). The segment covering 351–361 has biased composition (acidic residues); sequence DMDDGDDSDDD. The chain crosses the membrane as a helical span at residues 379-399; that stretch reads GGISIIRFIFSSAAWLFSFVF. Positions 403 to 413 are enriched in polar residues; the sequence is TPSENSLSNQQ. 2 disordered regions span residues 403-535 and 724-770; these read TPSE…QEED and NGSS…SPVP. A compositionally biased stretch (acidic residues) spans 414–424; the sequence is IDDDEDYEDGD. The segment covering 432–451 has biased composition (polar residues); the sequence is TDSMTSTTKGRANTMPSTTR. 2 stretches are compositionally biased toward low complexity: residues 452 to 467 and 475 to 490; these read SQNN…QSNG and SHQN…SNGH. Residues 503-726 are a coiled coil; it reads DTNASNETDI…VQEFQIKNGS (224 aa). Basic and acidic residues predominate over residues 510–535; sequence TDIRSMSRELESLRSEISSRRSQEED. A compositionally biased stretch (polar residues) spans 734-761; that stretch reads ETLMNGRSSTEANNENDTTASDQSSPHQ.

Strong expression in many neurons, very weak expression is also detected in others tissues.

It is found in the rough endoplasmic reticulum membrane. Its subcellular location is the nucleus membrane. Plays a role in the regulation of neuronal activity. In AWA and AWC neurons, plays a role in regulating olfactory adaptation by controlling the forgetting sensory responses to odorants such as diacetyl and isoamyl alcohol. May play a role in regulating daf-7 expression in ASI neurons in response to bacterial small RNAs. In ASI neurons, promotes dauer formation in response to pheromones such as the ascarosides ascr#2 and ascr#3. The sequence is that of Macoilin from Caenorhabditis elegans.